We begin with the raw amino-acid sequence, 353 residues long: Phospho-N-acetylmuramoyl-pentapeptide-transferase (353 aa).

10 helical membrane passes run 22–42, 65–85, 88–108, 129–149, 161–181, 192–212, 228–248, 256–276, 281–301, and 330–350; these read FAFF…ITWA, TPTM…LFCI, DNIF…IGLI, LLAQ…SSEL, PLFD…ISSS, GLAT…LYLS, GLGE…GFLW, VFMG…LAVI, ILLL…ILQV, and KIIV…LASI.

This sequence belongs to the glycosyltransferase 4 family. MraY subfamily. Mg(2+) serves as cofactor.

It is found in the cell inner membrane. It carries out the reaction UDP-N-acetyl-alpha-D-muramoyl-L-alanyl-gamma-D-glutamyl-meso-2,6-diaminopimeloyl-D-alanyl-D-alanine + di-trans,octa-cis-undecaprenyl phosphate = di-trans,octa-cis-undecaprenyl diphospho-N-acetyl-alpha-D-muramoyl-L-alanyl-D-glutamyl-meso-2,6-diaminopimeloyl-D-alanyl-D-alanine + UMP. It functions in the pathway cell wall biogenesis; peptidoglycan biosynthesis. In terms of biological role, catalyzes the initial step of the lipid cycle reactions in the biosynthesis of the cell wall peptidoglycan: transfers peptidoglycan precursor phospho-MurNAc-pentapeptide from UDP-MurNAc-pentapeptide onto the lipid carrier undecaprenyl phosphate, yielding undecaprenyl-pyrophosphoryl-MurNAc-pentapeptide, known as lipid I. This Campylobacter jejuni subsp. jejuni serotype O:2 (strain ATCC 700819 / NCTC 11168) protein is Phospho-N-acetylmuramoyl-pentapeptide-transferase.